The primary structure comprises 39 residues: Cytochrome b559 subunit beta (39 aa).

A helical transmembrane segment spans residues 14–30; that stretch reads WLAVHGLAIPTVFFLGS. Residue His-18 coordinates heme.

The protein belongs to the PsbE/PsbF family. As to quaternary structure, heterodimer of an alpha subunit and a beta subunit. PSII is composed of 1 copy each of membrane proteins PsbA, PsbB, PsbC, PsbD, PsbE, PsbF, PsbH, PsbI, PsbJ, PsbK, PsbL, PsbM, PsbT, PsbX, PsbY, PsbZ, Psb30/Ycf12, at least 3 peripheral proteins of the oxygen-evolving complex and a large number of cofactors. It forms dimeric complexes. It depends on heme b as a cofactor.

The protein localises to the plastid membrane. This b-type cytochrome is tightly associated with the reaction center of photosystem II (PSII). PSII is a light-driven water:plastoquinone oxidoreductase that uses light energy to abstract electrons from H(2)O, generating O(2) and a proton gradient subsequently used for ATP formation. It consists of a core antenna complex that captures photons, and an electron transfer chain that converts photonic excitation into a charge separation. This is Cytochrome b559 subunit beta from Cuscuta gronovii (Common dodder).